The chain runs to 906 residues: Protein translocase subunit SecA (906 aa).

ATP contacts are provided by residues Q89, 107–111, and D502; that span reads GEGKT. Residues C890, C892, C901, and H902 each contribute to the Zn(2+) site.

The protein belongs to the SecA family. Monomer and homodimer. Part of the essential Sec protein translocation apparatus which comprises SecA, SecYEG and auxiliary proteins SecDF-YajC and YidC. Requires Zn(2+) as cofactor.

It localises to the cell inner membrane. It is found in the cytoplasm. The catalysed reaction is ATP + H2O + cellular proteinSide 1 = ADP + phosphate + cellular proteinSide 2.. Its function is as follows. Part of the Sec protein translocase complex. Interacts with the SecYEG preprotein conducting channel. Has a central role in coupling the hydrolysis of ATP to the transfer of proteins into and across the cell membrane, serving both as a receptor for the preprotein-SecB complex and as an ATP-driven molecular motor driving the stepwise translocation of polypeptide chains across the membrane. The chain is Protein translocase subunit SecA from Brucella canis (strain ATCC 23365 / NCTC 10854 / RM-666).